The primary structure comprises 406 residues: 5-methylthioadenosine/S-adenosylhomocysteine deaminase (406 aa).

Residues His55 and His57 each coordinate Zn(2+). Substrate-binding residues include Glu84, Arg136, Arg148, and His173. His200 is a Zn(2+) binding site. Substrate is bound by residues Glu203 and Asp279. Position 279 (Asp279) interacts with Zn(2+).

The protein belongs to the metallo-dependent hydrolases superfamily. MTA/SAH deaminase family. Zn(2+) serves as cofactor.

It carries out the reaction S-adenosyl-L-homocysteine + H2O + H(+) = S-inosyl-L-homocysteine + NH4(+). The catalysed reaction is S-methyl-5'-thioadenosine + H2O + H(+) = S-methyl-5'-thioinosine + NH4(+). Functionally, catalyzes the deamination of 5-methylthioadenosine and S-adenosyl-L-homocysteine into 5-methylthioinosine and S-inosyl-L-homocysteine, respectively. Is also able to deaminate adenosine. Adenosine-5-monophosphate (AMP) and S-adenosyl-L-methionine (SAM) are not enzyme substrates. The protein is 5-methylthioadenosine/S-adenosylhomocysteine deaminase (mtaD) of Thermotoga maritima (strain ATCC 43589 / DSM 3109 / JCM 10099 / NBRC 100826 / MSB8).